The chain runs to 230 residues: uncharacterized protein (230 aa).

A helical transmembrane segment spans residues 19–39; the sequence is GIFQVLLQLVLAMMTVWDFAG. The N-linked (GlcNAc...) asparagine; by host glycan is linked to Asn41. Residues 55–75 form a helical membrane-spanning segment; that stretch reads SFLLVLYTGLKQILEYMFSIC. 4 N-linked (GlcNAc...) asparagine; by host glycosylation sites follow: Asn86, Asn157, Asn168, and Asn182. Residues 172–196 adopt a coiled-coil conformation; sequence TNLHKYQNDENDTEEDSEDIEKNSD. The interval 178-205 is disordered; it reads QNDENDTEEDSEDIEKNSDPKENSDIDS. The segment covering 180-190 has biased composition (acidic residues); it reads DENDTEEDSED. Positions 191–201 are enriched in basic and acidic residues; it reads IEKNSDPKENS.

Its subcellular location is the membrane. This is an uncharacterized protein from Acanthamoeba polyphaga mimivirus (APMV).